Consider the following 349-residue polypeptide: Alanine racemase (349 aa).

Catalysis depends on Lys35, which acts as the Proton acceptor; specific for D-alanine. Lys35 carries the N6-(pyridoxal phosphate)lysine modification. Arg130 contacts substrate. The active-site Proton acceptor; specific for L-alanine is Tyr244. Substrate is bound at residue Met292.

Belongs to the alanine racemase family. Pyridoxal 5'-phosphate is required as a cofactor.

The catalysed reaction is L-alanine = D-alanine. It functions in the pathway amino-acid biosynthesis; D-alanine biosynthesis; D-alanine from L-alanine: step 1/1. Its function is as follows. Catalyzes the interconversion of L-alanine and D-alanine. May also act on other amino acids. This Dinoroseobacter shibae (strain DSM 16493 / NCIMB 14021 / DFL 12) protein is Alanine racemase (alr).